The sequence spans 535 residues: Tetrathionate hydrolase (535 aa).

Residues 1–39 (MNLKILVGLFILGIIILSAMTFLNFTTIVAQDKGDQQPK) form the signal peptide. Residue N50 is glycosylated (N-linked (GlcNAc...) asparagine).

It belongs to the tetrathionate hydrolase family. In terms of assembly, monomer and homodimer; in equilibrium.

It localises to the cell surface. It carries out the reaction tetrathionate + H2O = sulfur + thiosulfate + sulfate + H(+). In terms of biological role, catalyzes the hydrolysis of tetrathionate to generate elemental sulfur, thiosulfate and sulfate. This is Tetrathionate hydrolase from Acidianus ambivalens (Desulfurolobus ambivalens).